A 348-amino-acid polypeptide reads, in one-letter code: Holliday junction branch migration complex subunit RuvB (348 aa).

Positions 1–183 (MAPQPRRLIA…FGIPIRLEYY (183 aa)) are large ATPase domain (RuvB-L). Residues Leu22, Arg23, Gly64, Lys67, Thr68, Thr69, 130–132 (EDF), Arg173, Tyr183, and Arg220 each bind ATP. Residue Thr68 coordinates Mg(2+). Residues 184–254 (TVEELECIVR…VADRALRLLD (71 aa)) form a small ATPAse domain (RuvB-S) region. Residues 257–348 (HIGLDQMDRR…FQLFSEGGEE (92 aa)) are head domain (RuvB-H). Residues Arg293, Arg312, and Arg317 each coordinate DNA.

This sequence belongs to the RuvB family. As to quaternary structure, homohexamer. Forms an RuvA(8)-RuvB(12)-Holliday junction (HJ) complex. HJ DNA is sandwiched between 2 RuvA tetramers; dsDNA enters through RuvA and exits via RuvB. An RuvB hexamer assembles on each DNA strand where it exits the tetramer. Each RuvB hexamer is contacted by two RuvA subunits (via domain III) on 2 adjacent RuvB subunits; this complex drives branch migration. In the full resolvosome a probable DNA-RuvA(4)-RuvB(12)-RuvC(2) complex forms which resolves the HJ.

Its subcellular location is the cytoplasm. It catalyses the reaction ATP + H2O = ADP + phosphate + H(+). The RuvA-RuvB-RuvC complex processes Holliday junction (HJ) DNA during genetic recombination and DNA repair, while the RuvA-RuvB complex plays an important role in the rescue of blocked DNA replication forks via replication fork reversal (RFR). RuvA specifically binds to HJ cruciform DNA, conferring on it an open structure. The RuvB hexamer acts as an ATP-dependent pump, pulling dsDNA into and through the RuvAB complex. RuvB forms 2 homohexamers on either side of HJ DNA bound by 1 or 2 RuvA tetramers; 4 subunits per hexamer contact DNA at a time. Coordinated motions by a converter formed by DNA-disengaged RuvB subunits stimulates ATP hydrolysis and nucleotide exchange. Immobilization of the converter enables RuvB to convert the ATP-contained energy into a lever motion, pulling 2 nucleotides of DNA out of the RuvA tetramer per ATP hydrolyzed, thus driving DNA branch migration. The RuvB motors rotate together with the DNA substrate, which together with the progressing nucleotide cycle form the mechanistic basis for DNA recombination by continuous HJ branch migration. Branch migration allows RuvC to scan DNA until it finds its consensus sequence, where it cleaves and resolves cruciform DNA. This chain is Holliday junction branch migration complex subunit RuvB, found in Methylocella silvestris (strain DSM 15510 / CIP 108128 / LMG 27833 / NCIMB 13906 / BL2).